A 24-amino-acid polypeptide reads, in one-letter code: Brevinin-1Ecb (24 aa).

A disulfide bond links cysteine 18 and cysteine 24.

As to expression, expressed by the skin glands.

It is found in the secreted. Its function is as follows. Shows antibacterial activity against representative Gram-negative and Gram-positive bacterial species, and hemolytic activity. The polypeptide is Brevinin-1Ecb (Pelophylax ridibundus (Marsh frog)).